Here is a 126-residue protein sequence, read N- to C-terminus: Fluoride-specific ion channel FluC (126 aa).

4 helical membrane-spanning segments follow: residues 3 to 23 (PLGF…RWGL), 36 to 56 (YGTL…VGFF), 68 to 88 (LLAI…SSEA), and 99 to 119 (WALL…ALGL). Na(+) is bound by residues G76 and T79.

It belongs to the fluoride channel Fluc/FEX (TC 1.A.43) family.

It is found in the cell inner membrane. The catalysed reaction is fluoride(in) = fluoride(out). With respect to regulation, na(+) is not transported, but it plays an essential structural role and its presence is essential for fluoride channel function. Fluoride-specific ion channel. Important for reducing fluoride concentration in the cell, thus reducing its toxicity. This chain is Fluoride-specific ion channel FluC, found in Cupriavidus pinatubonensis (strain JMP 134 / LMG 1197) (Cupriavidus necator (strain JMP 134)).